The following is a 92-amino-acid chain: Transcription factor PRE5 (92 aa).

The region spanning 4 to 59 (RRSRQTSNASRISDDQMIDLVSKLRQFLPEIHERRRSDKVSASKVLQETCNYIRKL) is the bHLH domain.

This sequence belongs to the bHLH protein family. Interacts with IBH1.

It localises to the nucleus. Functionally, atypical and probable non DNA-binding bHLH transcription factor that integrates multiple signaling pathways to regulate cell elongation and plant development. May have a regulatory role in various aspects of gibberellin-dependent growth and development. The protein is Transcription factor PRE5 (PRE5) of Arabidopsis thaliana (Mouse-ear cress).